We begin with the raw amino-acid sequence, 206 residues long: Large ribosomal subunit protein uL4 (206 aa).

Belongs to the universal ribosomal protein uL4 family. As to quaternary structure, part of the 50S ribosomal subunit.

Its function is as follows. One of the primary rRNA binding proteins, this protein initially binds near the 5'-end of the 23S rRNA. It is important during the early stages of 50S assembly. It makes multiple contacts with different domains of the 23S rRNA in the assembled 50S subunit and ribosome. Functionally, forms part of the polypeptide exit tunnel. The sequence is that of Large ribosomal subunit protein uL4 from Methylorubrum populi (strain ATCC BAA-705 / NCIMB 13946 / BJ001) (Methylobacterium populi).